The sequence spans 596 residues: uncharacterized protein (596 aa).

Composition is skewed to basic residues over residues 1–10 and 18–29; these read MRLRSQKRGN and KTRKGKGKKLKP. Residues 1-30 form a disordered region; sequence MRLRSQKRGNKFVALPAKTRKGKGKKLKPK.

This is an uncharacterized protein from Magallana gigas (Pacific oyster).